A 271-amino-acid polypeptide reads, in one-letter code: 5-deoxy-glucuronate isomerase (271 aa).

Belongs to the isomerase IolB family.

The catalysed reaction is 5-deoxy-D-glucuronate = 5-dehydro-2-deoxy-D-gluconate. The protein operates within polyol metabolism; myo-inositol degradation into acetyl-CoA; acetyl-CoA from myo-inositol: step 4/7. Its function is as follows. Involved in the isomerization of 5-deoxy-glucuronate (5DG) to 5-dehydro-2-deoxy-D-gluconate (DKG or 2-deoxy-5-keto-D-gluconate). The chain is 5-deoxy-glucuronate isomerase from Bacillus velezensis (strain DSM 23117 / BGSC 10A6 / LMG 26770 / FZB42) (Bacillus amyloliquefaciens subsp. plantarum).